A 137-amino-acid chain; its full sequence is Large ribosomal subunit protein uL16 (137 aa).

This sequence belongs to the universal ribosomal protein uL16 family. Part of the 50S ribosomal subunit.

Functionally, binds 23S rRNA and is also seen to make contacts with the A and possibly P site tRNAs. This chain is Large ribosomal subunit protein uL16, found in Solidesulfovibrio magneticus (strain ATCC 700980 / DSM 13731 / RS-1) (Desulfovibrio magneticus).